A 136-amino-acid polypeptide reads, in one-letter code: MRHGKVHRKLNRTAEHRKAMFANMCASLIKHEQIITTLPKAKELRPIVEKLITLGKKNTLASRRQAISEMRDLDQVKKLFAVMAPRYADRHGGYTRIIKAGFRYGDNAPMAVIEFVDRDIEAKGKDSGPTQESEAA.

It belongs to the bacterial ribosomal protein bL17 family. Part of the 50S ribosomal subunit. Contacts protein L32.

The chain is Large ribosomal subunit protein bL17 from Rhodopseudomonas palustris (strain BisA53).